The sequence spans 47 residues: Light-harvesting protein B800/850/890 alpha-2 chain (47 aa).

Residues 1–12 (MWRMWKILDYRR) lie on the Cytoplasmic side of the membrane. A helical membrane pass occupies residues 13–33 (TVVLAHVGMAVLALLIHFILL). H29 contributes to the a bacteriochlorophyll binding site. At 34–47 (STESFNWLEGNPYG) the chain is on the periplasmic side.

The protein belongs to the antenna complex alpha subunit family. In terms of assembly, the core complex is formed by different alpha and beta chains, binding bacteriochlorophyll molecules, and arranged most probably in tetrameric structures disposed around the reaction center. The non-pigmented gamma chains may constitute additional components.

It is found in the cell inner membrane. In terms of biological role, antenna complexes are light-harvesting systems, which transfer the excitation energy to the reaction centers. In Halorhodospira halophila (strain DSM 244 / SL1) (Ectothiorhodospira halophila (strain DSM 244 / SL1)), this protein is Light-harvesting protein B800/850/890 alpha-2 chain.